The following is a 99-amino-acid chain: Small ribosomal subunit protein bS21 (99 aa).

Residues 60 to 99 form a disordered region; that stretch reads KKLQREGLLPMKPKPVFGAGPGGDRRGPGAGPGAGPRPAR.

This sequence belongs to the bacterial ribosomal protein bS21 family.

The chain is Small ribosomal subunit protein bS21 from Rhodopseudomonas palustris (strain BisA53).